The sequence spans 232 residues: Orotate phosphoribosyltransferase (232 aa).

Residues Arg107, Lys108, Lys111, and 133–141 each bind 5-phospho-alpha-D-ribose 1-diphosphate; that span reads EDLTTDGGS. Thr137 serves as a coordination point for orotate.

This sequence belongs to the purine/pyrimidine phosphoribosyltransferase family. PyrE subfamily. As to quaternary structure, homodimer. It depends on Mg(2+) as a cofactor.

The catalysed reaction is orotidine 5'-phosphate + diphosphate = orotate + 5-phospho-alpha-D-ribose 1-diphosphate. Its pathway is pyrimidine metabolism; UMP biosynthesis via de novo pathway; UMP from orotate: step 1/2. Functionally, catalyzes the transfer of a ribosyl phosphate group from 5-phosphoribose 1-diphosphate to orotate, leading to the formation of orotidine monophosphate (OMP). This Cereibacter sphaeroides (strain ATCC 17029 / ATH 2.4.9) (Rhodobacter sphaeroides) protein is Orotate phosphoribosyltransferase.